The chain runs to 699 residues: Elongation factor G (699 aa).

The region spanning 8-288 (EDYRNFGIMA…AVVDYLPSPI (281 aa)) is the tr-type G domain. Residues 17 to 24 (AHIDAGKT), 86 to 90 (DTPGH), and 140 to 143 (NKMD) each bind GTP.

The protein belongs to the TRAFAC class translation factor GTPase superfamily. Classic translation factor GTPase family. EF-G/EF-2 subfamily.

The protein localises to the cytoplasm. Catalyzes the GTP-dependent ribosomal translocation step during translation elongation. During this step, the ribosome changes from the pre-translocational (PRE) to the post-translocational (POST) state as the newly formed A-site-bound peptidyl-tRNA and P-site-bound deacylated tRNA move to the P and E sites, respectively. Catalyzes the coordinated movement of the two tRNA molecules, the mRNA and conformational changes in the ribosome. This Sinorhizobium fredii (strain NBRC 101917 / NGR234) protein is Elongation factor G.